Here is a 112-residue protein sequence, read N- to C-terminus: Small ribosomal subunit protein bS6 (112 aa).

The protein belongs to the bacterial ribosomal protein bS6 family.

Binds together with bS18 to 16S ribosomal RNA. This Chlamydia felis (strain Fe/C-56) (Chlamydophila felis) protein is Small ribosomal subunit protein bS6.